A 274-amino-acid polypeptide reads, in one-letter code: 4-deoxy-L-threo-5-hexosulose-uronate ketol-isomerase (274 aa).

Zn(2+) is bound by residues His192, His194, Glu199, and His241.

The protein belongs to the KduI family. Zn(2+) is required as a cofactor.

The enzyme catalyses 5-dehydro-4-deoxy-D-glucuronate = 3-deoxy-D-glycero-2,5-hexodiulosonate. It functions in the pathway glycan metabolism; pectin degradation; 2-dehydro-3-deoxy-D-gluconate from pectin: step 4/5. Functionally, catalyzes the isomerization of 5-dehydro-4-deoxy-D-glucuronate to 3-deoxy-D-glycero-2,5-hexodiulosonate. The chain is 4-deoxy-L-threo-5-hexosulose-uronate ketol-isomerase from Agrobacterium fabrum (strain C58 / ATCC 33970) (Agrobacterium tumefaciens (strain C58)).